We begin with the raw amino-acid sequence, 203 residues long: MSVLSSRTGRDRQRYDNNFRLVSGCIPYRLMKADETEEDSGVDFVNKLEVLMVSSPNRHDLVFPKGGWEDDETVLEAASREAIEEAGVKGILRELPLGVWEFRSKSSTVEDECLGGCKGYMFALKVTEELEDWPERKNRERRWLTVKEALELCRYEWMQRALEEFLRVMEDERRLRTEEETVHDSSKLEEESQIDPWYCFVVN.

The 149-residue stretch at Asn-18–Leu-166 folds into the Nudix hydrolase domain. The short motif at Gly-66–Gly-87 is the Nudix box element. Mg(2+) is bound by residues Glu-81 and Glu-85.

Belongs to the Nudix hydrolase family. Requires Mg(2+) as cofactor. The cofactor is Mn(2+). Expressed in roots, leaves, stems and inflorescences.

Its subcellular location is the mitochondrion. In terms of biological role, probably mediates the hydrolysis of some nucleoside diphosphate derivatives. The chain is Nudix hydrolase 12, mitochondrial (NUDT12) from Arabidopsis thaliana (Mouse-ear cress).